The primary structure comprises 379 residues: Cobalt-precorrin-5B C(1)-methyltransferase (379 aa).

The protein belongs to the CbiD family.

The enzyme catalyses Co-precorrin-5B + S-adenosyl-L-methionine = Co-precorrin-6A + S-adenosyl-L-homocysteine. It functions in the pathway cofactor biosynthesis; adenosylcobalamin biosynthesis; cob(II)yrinate a,c-diamide from sirohydrochlorin (anaerobic route): step 6/10. Its function is as follows. Catalyzes the methylation of C-1 in cobalt-precorrin-5B to form cobalt-precorrin-6A. The chain is Cobalt-precorrin-5B C(1)-methyltransferase from Salmonella paratyphi A (strain ATCC 9150 / SARB42).